Consider the following 894-residue polypeptide: Microsomal triglyceride transfer protein large subunit (894 aa).

An N-terminal signal peptide occupies residues 1–21 (MILLAVLFLCFFSSYSASVKG). The 631-residue stretch at 28-658 (LNNERLYKLT…IFQYIGKAEL (631 aa)) folds into the Vitellogenin domain. Cys174 and Cys194 are joined by a disulfide.

Interacts with PRAP1. In terms of assembly, heterodimer; heterodimerizes with the protein disulfide isomerase (P4HB/PDI). Interacts with APOB. As to quaternary structure, heterodimer; heterodimerizes with the protein disulfide isomerase (P4HB/PDI). In terms of processing, cleaved by signal peptidase between residues Gln-33 and Asn-34. In terms of tissue distribution, mainly expressed in the intestine and the liver, and at lower levels in white and brown fat cells. Expressed in heart. As to expression, ubiquitous, and is the major isoform in hematopoietic cells and adipocytes.

It is found in the endoplasmic reticulum. Its subcellular location is the golgi apparatus. It carries out the reaction a 1,2-diacyl-sn-glycero-3-phosphocholine(in) = a 1,2-diacyl-sn-glycero-3-phosphocholine(out). It catalyses the reaction a 1,2-diacyl-sn-glycero-3-phosphoethanolamine(in) = a 1,2-diacyl-sn-glycero-3-phosphoethanolamine(out). The catalysed reaction is a cholesterol ester(in) = a cholesterol ester(out). The enzyme catalyses a triacyl-sn-glycerol(in) = a triacyl-sn-glycerol(out). In terms of biological role, catalyzes the transport of triglyceride, cholesteryl ester, and phospholipid between phospholipid surfaces. Required for the assembly and secretion of plasma lipoproteins that contain apolipoprotein B. May be involved in regulating cholesteryl ester biosynthesis in cells that produce lipoproteins. Critical for the development of natural killer T (NKT) cells. Required for the assembly and secretion of plasma lipoproteins that contain apolipoprotein B. This Mus musculus (Mouse) protein is Microsomal triglyceride transfer protein large subunit (Mttp).